The following is a 391-amino-acid chain: Chorismate synthase (391 aa).

Arginine 48 contacts NADP(+). FMN contacts are provided by residues 126-128 (RAS), glycine 286, 301-305 (KPTSS), and arginine 328.

It belongs to the chorismate synthase family. FMNH2 is required as a cofactor.

It catalyses the reaction 5-O-(1-carboxyvinyl)-3-phosphoshikimate = chorismate + phosphate. It functions in the pathway metabolic intermediate biosynthesis; chorismate biosynthesis; chorismate from D-erythrose 4-phosphate and phosphoenolpyruvate: step 7/7. In terms of biological role, catalyzes the anti-1,4-elimination of the C-3 phosphate and the C-6 proR hydrogen from 5-enolpyruvylshikimate-3-phosphate (EPSP) to yield chorismate, which is the branch point compound that serves as the starting substrate for the three terminal pathways of aromatic amino acid biosynthesis. This reaction introduces a second double bond into the aromatic ring system. The sequence is that of Chorismate synthase from Saccharolobus islandicus (strain M.16.27) (Sulfolobus islandicus).